We begin with the raw amino-acid sequence, 588 residues long: Pescadillo homolog (588 aa).

Residues 1–54 (MGGLEKKKYERGSATNYITRNKARKKLQLSLADFRRLCILKGIYPHEPKHKKKV) form a required for 28S ribosomal RNA processing region. The interval 1 to 257 (MGGLEKKKYE…PKLEGQAQAE (257 aa)) is sufficient for nucleolar localization. Lys-98 carries the N6-acetyllysine modification. A disordered region spans residues 294–314 (EAEVDEFPTDGEMSAQEEDRR). A sufficient for interaction with MAP1B region spans residues 306–415 (MSAQEEDRRK…LLLPVAEYFS (110 aa)). One can recognise a BRCT domain in the interval 322–415 (KHKKLFEGLK…LLLPVAEYFS (94 aa)). A disordered region spans residues 448-515 (GEDPGNLNES…GKKPRVMAGT (68 aa)). A compositionally biased stretch (acidic residues) spans 456–486 (ESEEEEEEDDNNEGDGDEEGENEEEEEDAEA). Residues 487-508 (GSEKEEEARLAALEEQRMEGKK) are compositionally biased toward basic and acidic residues. A Glycyl lysine isopeptide (Lys-Gly) (interchain with G-Cter in SUMO1); alternate cross-link involves residue Lys-517. Residue Lys-517 forms a Glycyl lysine isopeptide (Lys-Gly) (interchain with G-Cter in SUMO2); alternate linkage. Positions 539 to 588 (MMKKREKYLYQKIMFGKRRKIREANKLAEKRKAHDEAVRSEKKAKKARPE) are required for 28S ribosomal RNA processing. The segment at 565–588 (LAEKRKAHDEAVRSEKKAKKARPE) is disordered.

The protein belongs to the pescadillo family. Component of the PeBoW complex, composed of BOP1, PES1 and WDR12. The complex is held together by BOP1, which interacts with PES1 via its N-terminal domain and with WDR12 via a high-affinity interaction between the seven-bladed beta-propeller domains of the 2 proteins. The PeBoW complex associates with the 66S pre-ribosome. The PeBoW complex also associates with DDX27, PES1 interacts directly with DDX27. Interacts with IRS1 and UBTF. May interact with MAP1B. Sumoylated. As to expression, significant levels are detected in a variety of cancer cell lines, including glioblastoma, breast carcinoma, colon carcinoma and cervical carcinoma cells. Levels are abnormally elevated in malignant tumors of astrocytic origin.

The protein resides in the nucleus. Its subcellular location is the nucleolus. It is found in the nucleoplasm. The protein localises to the chromosome. In terms of biological role, component of the PeBoW complex, which is required for maturation of 28S and 5.8S ribosomal RNAs and formation of the 60S ribosome. This chain is Pescadillo homolog, found in Homo sapiens (Human).